We begin with the raw amino-acid sequence, 43 residues long: Photosystem I reaction center subunit IX (43 aa).

The helical transmembrane segment at 7 to 27 (YLSTAPVLATFWFGLLAGLLI) threads the bilayer.

This sequence belongs to the PsaJ family.

The protein resides in the plastid. It localises to the chloroplast thylakoid membrane. In terms of biological role, may help in the organization of the PsaE and PsaF subunits. This chain is Photosystem I reaction center subunit IX, found in Gnetum parvifolium (Small-leaved jointfir).